A 191-amino-acid chain; its full sequence is Protein GrpE (191 aa).

It belongs to the GrpE family. In terms of assembly, homodimer.

The protein resides in the cytoplasm. Functionally, participates actively in the response to hyperosmotic and heat shock by preventing the aggregation of stress-denatured proteins, in association with DnaK and GrpE. It is the nucleotide exchange factor for DnaK and may function as a thermosensor. Unfolded proteins bind initially to DnaJ; upon interaction with the DnaJ-bound protein, DnaK hydrolyzes its bound ATP, resulting in the formation of a stable complex. GrpE releases ADP from DnaK; ATP binding to DnaK triggers the release of the substrate protein, thus completing the reaction cycle. Several rounds of ATP-dependent interactions between DnaJ, DnaK and GrpE are required for fully efficient folding. The chain is Protein GrpE from Helicobacter pylori (strain P12).